Consider the following 581-residue polypeptide: Frizzled-3 (581 aa).

Residues 1–19 form the signal peptide; it reads MYAASILILHLTWAVATIA. Residues 20 to 237 are Extracellular-facing; that stretch reads ANGAGHNGPV…TSSQKKTSET (218 aa). One can recognise an FZ domain in the interval 35–156; that stretch reads PNGLQCQPIA…PEKHELCMQI (122 aa). 5 disulfide bridges follow: C40-C101, C48-C94, C85-C123, C112-C153, and C116-C141. N-linked (GlcNAc...) asparagine glycosylation is present at N54. N-linked (GlcNAc...) asparagine glycosylation occurs at N206. Residues 238–258 form a helical membrane-spanning segment; sequence LILGLSAVCFVLTLFALVTFW. At 259-270 the chain is on the cytoplasmic side; sequence AEPTRFGYPERP. A helical transmembrane segment spans residues 271–291; it reads VLFLCLCYNLFSVCYLERIVF. Over 292-321 the chain is Extracellular; the sequence is HNQARMHDVELQGRLMRPGCLLTPPCLASY. A helical membrane pass occupies residues 322 to 342; sequence ITTSYLSLCAASWWLIFALCF. Residues 343 to 359 lie on the Cytoplasmic side of the membrane; it reads YLSSHKKWSSEALEKRS. The chain crosses the membrane as a helical span at residues 360 to 380; the sequence is GLFHVLAWVPPLAPPIAALLL. Over 381-393 the chain is Extracellular; that stretch reads EKVRPSELTGMCY. A helical membrane pass occupies residues 394-414; that stretch reads APGFVELPALVLLLLGLYFTL. Topologically, residues 415–442 are cytoplasmic; the sequence is RASRSLLSLQQQLQPTLAHHRFGQIRKR. Residues 443-463 traverse the membrane as a helical segment; the sequence is FVLFSLLYFAPTTAGVVAALC. The Extracellular portion of the chain corresponds to 464-488; sequence ERYADSVPSCSTPDDCLSPTPLSAW. A helical transmembrane segment spans residues 489-509; that stretch reads PALVRIFFQLVGGTLTGLWVW. Topologically, residues 510-581 are cytoplasmic; it reads SRKTCESYRN…PVYNPNQSRV (72 aa). Positions 579–581 match the PDZ-binding motif; the sequence is SRV.

Belongs to the G-protein coupled receptor Fz/Smo family. Wing, leg and eye imaginal disks. In embryos, expressed is seen in brain, proventriculus, Malpighian tubules, anal plate and visceral mesoderm of parasegment 8.

The protein resides in the membrane. Its function is as follows. Receptor for Wnt proteins. Most of frizzled receptors are coupled to the beta-catenin canonical signaling pathway, which leads to the activation of disheveled proteins, inhibition of GSK-3 kinase, nuclear accumulation of beta-catenin and activation of Wnt target genes. A second signaling pathway involving PKC and calcium fluxes has been seen for some family members, but it is not yet clear if it represents a distinct pathway or if it can be integrated in the canonical pathway, as PKC seems to be required for Wnt-mediated inactivation of GSK-3 kinase. Both pathways seem to involve interactions with G-proteins. Required to coordinate the cytoskeletons of epidermal cells to produce a parallel array of cuticular hairs and bristles. This is Frizzled-3 (fz3) from Drosophila melanogaster (Fruit fly).